Here is a 433-residue protein sequence, read N- to C-terminus: Trigger factor (433 aa).

Residues 163–248 (GDTVNIDFSG…VNEIKFKEVP (86 aa)) form the PPIase FKBP-type domain.

Belongs to the FKBP-type PPIase family. Tig subfamily.

It localises to the cytoplasm. The enzyme catalyses [protein]-peptidylproline (omega=180) = [protein]-peptidylproline (omega=0). Functionally, involved in protein export. Acts as a chaperone by maintaining the newly synthesized protein in an open conformation. Functions as a peptidyl-prolyl cis-trans isomerase. This Staphylococcus aureus (strain Newman) protein is Trigger factor.